Reading from the N-terminus, the 205-residue chain is Holliday junction branch migration complex subunit RuvA (205 aa).

The tract at residues 1–64 (MIGRLKGILI…ENLHQLFGFA (64 aa)) is domain I. Positions 65-143 (EQRDRSLFRT…NWDLPQGDML (79 aa)) are domain II. The segment at 144 to 153 (AHGEIQAIAS) is flexible linker. The segment at 153–205 (SDNDIYAEAESALIALGYKPVDAAKMVASAAKQKPEARSEELIRIALRSLAGV) is domain III.

It belongs to the RuvA family. Homotetramer. Forms an RuvA(8)-RuvB(12)-Holliday junction (HJ) complex. HJ DNA is sandwiched between 2 RuvA tetramers; dsDNA enters through RuvA and exits via RuvB. An RuvB hexamer assembles on each DNA strand where it exits the tetramer. Each RuvB hexamer is contacted by two RuvA subunits (via domain III) on 2 adjacent RuvB subunits; this complex drives branch migration. In the full resolvosome a probable DNA-RuvA(4)-RuvB(12)-RuvC(2) complex forms which resolves the HJ.

The protein resides in the cytoplasm. In terms of biological role, the RuvA-RuvB-RuvC complex processes Holliday junction (HJ) DNA during genetic recombination and DNA repair, while the RuvA-RuvB complex plays an important role in the rescue of blocked DNA replication forks via replication fork reversal (RFR). RuvA specifically binds to HJ cruciform DNA, conferring on it an open structure. The RuvB hexamer acts as an ATP-dependent pump, pulling dsDNA into and through the RuvAB complex. HJ branch migration allows RuvC to scan DNA until it finds its consensus sequence, where it cleaves and resolves the cruciform DNA. This Cellvibrio japonicus (strain Ueda107) (Pseudomonas fluorescens subsp. cellulosa) protein is Holliday junction branch migration complex subunit RuvA.